The primary structure comprises 342 residues: Ornithine carbamoyltransferase, catabolic (342 aa).

Residues 59-62 (STRT), Ser-83, Arg-110, and 137-140 (HPTQ) contribute to the carbamoyl phosphate site. L-ornithine contacts are provided by residues Asn-169, Asp-235, and 239-240 (SL). Residues 276–277 (CL) and Arg-328 each bind carbamoyl phosphate.

It belongs to the aspartate/ornithine carbamoyltransferase superfamily. OTCase family. In terms of assembly, dodecamer (tetramer of trimers).

The protein localises to the cytoplasm. The enzyme catalyses carbamoyl phosphate + L-ornithine = L-citrulline + phosphate + H(+). Its pathway is amino-acid degradation; L-arginine degradation via ADI pathway; carbamoyl phosphate from L-arginine: step 2/2. Functionally, nvolved in the catabolism of arginine. Catalyzes the phosphorolysis of citrulline, the reverse reaction of the biosynthetic one, yielding ornithine and carbamoyl phosphate which serve to generate ATP from ADP. The chain is Ornithine carbamoyltransferase, catabolic (arcB) from Malacoplasma penetrans (strain HF-2) (Mycoplasma penetrans).